Reading from the N-terminus, the 108-residue chain is Nucleoid-associated protein PSPTO_3645 (108 aa).

The span at 85-96 (QASQDKTASMTA) shows a compositional bias: polar residues. The disordered stretch occupies residues 85–108 (QASQDKTASMTAGMQLPPGMKLPF).

Belongs to the YbaB/EbfC family. As to quaternary structure, homodimer.

It is found in the cytoplasm. It localises to the nucleoid. Functionally, binds to DNA and alters its conformation. May be involved in regulation of gene expression, nucleoid organization and DNA protection. This chain is Nucleoid-associated protein PSPTO_3645, found in Pseudomonas syringae pv. tomato (strain ATCC BAA-871 / DC3000).